The following is a 165-amino-acid chain: Phosphopantetheine adenylyltransferase (165 aa).

T9 contacts substrate. ATP is bound by residues 9–10 (TF) and H17. Substrate-binding residues include K41, L73, and R87. Residues 88-90 (GLR), E98, and 123-129 (YQFISGT) contribute to the ATP site.

It belongs to the bacterial CoaD family. Homohexamer. Mg(2+) serves as cofactor.

Its subcellular location is the cytoplasm. The catalysed reaction is (R)-4'-phosphopantetheine + ATP + H(+) = 3'-dephospho-CoA + diphosphate. It functions in the pathway cofactor biosynthesis; coenzyme A biosynthesis; CoA from (R)-pantothenate: step 4/5. Reversibly transfers an adenylyl group from ATP to 4'-phosphopantetheine, yielding dephospho-CoA (dPCoA) and pyrophosphate. The polypeptide is Phosphopantetheine adenylyltransferase (Burkholderia orbicola (strain MC0-3)).